The chain runs to 541 residues: Formimidoyltransferase-cyclodeaminase (541 aa).

Residues 1-181 are formiminotransferase N-subdomain; that stretch reads MSQLVECVPN…GATVTGARKF (181 aa). His-82 acts as the For formimidoyltransferase activity in catalysis. 163-172 lines the folate pocket; it reads GPSSFVPSWG. The formiminotransferase C-subdomain stretch occupies residues 182 to 326; sequence LIAFNINLLS…PKERIIEYLV (145 aa). The segment at 327–334 is linker; it reads PDSGPEQS. Positions 335 to 541 are cyclodeaminase/cyclohydrolase; the sequence is LLDTSLRGFV…VLGSLEARKE (207 aa). Asp-412 acts as the For cyclodeaminase activity in catalysis. Ser-520 bears the Phosphoserine mark.

This sequence in the C-terminal section; belongs to the cyclodeaminase/cyclohydrolase family. It in the N-terminal section; belongs to the formiminotransferase family. Homooctamer, including four polyglutamate binding sites. The subunits are arranged as a tetramer of dimers, and form a planar ring-shaped structure.

The protein localises to the cytoplasm. It localises to the cytoskeleton. The protein resides in the microtubule organizing center. It is found in the centrosome. Its subcellular location is the centriole. The protein localises to the golgi apparatus. It catalyses the reaction 5-formimidoyltetrahydrofolate + L-glutamate = N-formimidoyl-L-glutamate + (6S)-5,6,7,8-tetrahydrofolate. It carries out the reaction (6S)-5-formyl-5,6,7,8-tetrahydrofolate + L-glutamate = N-formyl-L-glutamate + (6S)-5,6,7,8-tetrahydrofolate + H(+). The catalysed reaction is 5-formimidoyltetrahydrofolate + 2 H(+) = (6R)-5,10-methenyltetrahydrofolate + NH4(+). It participates in amino-acid degradation; L-histidine degradation into L-glutamate; L-glutamate from N-formimidoyl-L-glutamate (transferase route): step 1/1. It functions in the pathway one-carbon metabolism; tetrahydrofolate interconversion. Functionally, folate-dependent enzyme, that displays both transferase and deaminase activity. Serves to channel one-carbon units from formiminoglutamate to the folate pool. Binds and promotes bundling of vimentin filaments originating from the Golgi. This is Formimidoyltransferase-cyclodeaminase (Ftcd) from Mus musculus (Mouse).